The sequence spans 403 residues: Alkaline protease 1 (403 aa).

The signal sequence occupies residues 1-21; the sequence is MQSIKRTLLLLGAVLPAVLAG. Positions 22 to 121 are excised as a propeptide; that stretch reads PIFPHRRAPT…VEEDQVWHLF (100 aa). Residues 36–120 enclose the Inhibitor I9 domain; that stretch reads KYIVTFKSDV…AVEEDQVWHL (85 aa). In terms of domain architecture, Peptidase S8 spans 130–403; it reads PWGLGSISHK…PNLLAYNGNA (274 aa). Active-site charge relay system residues include Asp-162 and His-193. N-linked (GlcNAc...) asparagine glycans are attached at residues Asn-253 and Asn-309. The Charge relay system role is filled by Ser-349.

The protein belongs to the peptidase S8 family.

Its subcellular location is the secreted. It carries out the reaction Hydrolysis of proteins with broad specificity, and of Bz-Arg-OEt &gt; Ac-Tyr-OEt. Does not hydrolyze peptide amides.. Functionally, secreted alkaline protease that allows assimilation of proteinaceous substrates. In Aspergillus flavus, this protein is Alkaline protease 1 (alp1).